Consider the following 199-residue polypeptide: MISPENITGLILAGGRAQRMGGIDKGLISFHQKPLIESAINRLKNQVGPILINANRNITKYAGYGYPVVMDETPDFSGPLAGFSVGLKACKTSYLLTSPCDSPLLPLDLAARLAAEMERGPFDLVYASSLESGKTWAQPVFCLMRANLQDSLTAFLTKGDLKIDRWFKELKSSTVIFDDAQAFANVNTPEELKILEAAL.

GTP is bound by residues 12–14 (LAG), Lys25, Asn53, Asp71, and Asp101. Asp101 lines the Mg(2+) pocket.

The protein belongs to the MobA family. Monomer. Mg(2+) serves as cofactor.

The protein localises to the cytoplasm. It catalyses the reaction Mo-molybdopterin + GTP + H(+) = Mo-molybdopterin guanine dinucleotide + diphosphate. Functionally, transfers a GMP moiety from GTP to Mo-molybdopterin (Mo-MPT) cofactor (Moco or molybdenum cofactor) to form Mo-molybdopterin guanine dinucleotide (Mo-MGD) cofactor. This Polynucleobacter asymbioticus (strain DSM 18221 / CIP 109841 / QLW-P1DMWA-1) (Polynucleobacter necessarius subsp. asymbioticus) protein is Molybdenum cofactor guanylyltransferase.